A 397-amino-acid chain; its full sequence is 16-O-methyltransferase bsc6 (397 aa).

Aspartate 262 provides a ligand contact to S-adenosyl-L-methionine. The active-site Proton acceptor is histidine 302.

This sequence belongs to the class I-like SAM-binding methyltransferase superfamily. Cation-independent O-methyltransferase family. Requires S-adenosyl-L-methionine as cofactor.

Its pathway is mycotoxin biosynthesis. 16-O-methyltransferase; part of the gene cluster that mediates the biosynthesis of the diterpene glucoside brassicicene C. In the first step of the brassicicene C biosynthesis, the bifunctional diterpene synthase bsc8 that possesses both prenyl transferase and terpene cyclase activity, converts isopentenyl diphosphate and dimethylallyl diphosphate into geranylgeranyl diphosphate (GGDP) that is further converted into fusicocca-2,10(14)-diene, the first precursor for brassicicene C. Fusicocca-2,10(14)-diene is then substrate of cytochrome P450 monooxygenase bsc1 for hydroxylation at the C-8 position. Oxidation at C-16 position to aldehyde is then catalyzed by the cytochrome P450 monooyxygenase bsc7, yielding fusicocca-2,10(14)-diene-8-beta,16-diol. Follows the isomerization of the double bond and reduction of aldehyde to alcohol catalyzed by the short-chain dehydrogenase/reductase bsc3 to yield the diol compound fusicocca-1,10(14)-diene-8 beta,16-diol. The next step is the oxidation at the C-3 position of fusicocca-2,10(14)-diene-8-beta,16-diol catalyzed by the alpha-ketoglutarate dependent dioxygenase bsc9, to produce a triol compound. Methylation of the hydroxy group at position 16 is performed by the methyltransferase bsc6. 16-O-methylation is followed by oxidation at the C-13 position to ketone and an alkyl shift of the methyl group leads to brassicicene C. Although the probable acetyltransferase bsc4 is included in the gene cluster, no acetylation reactions are necessary for brassicicene C biosynthesis. However, the fact that brassicicene E, which is a structurally related compound having an acetoxy group at position 12, was previously isolated from another strain of A.brassicicola suggests that the ATCC 96836 strain might also produce a small amount of brassicicene E. In Alternaria brassicicola (Dark leaf spot agent), this protein is 16-O-methyltransferase bsc6.